We begin with the raw amino-acid sequence, 613 residues long: Protein CER1-like 2 (613 aa).

The next 6 helical transmembrane spans lie at 13-33 (WTPL…DSIY), 44-64 (LLIV…ISLS), 95-115 (IIFN…TSTI), 122-142 (GVIL…YWFH), 182-202 (LILG…VVSI), and 322-342 (YLFL…SFSF). The region spanning 134–268 (VEFIYYWFHR…MPMYDYIYGT (135 aa)) is the Fatty acid hydroxylase domain.

Belongs to the sterol desaturase family. As to expression, not detected in any tissues.

It localises to the membrane. The polypeptide is Protein CER1-like 2 (Arabidopsis thaliana (Mouse-ear cress)).